We begin with the raw amino-acid sequence, 267 residues long: Cerberus (267 aa).

A signal peptide spans 1 to 17 (MHLLLFQLLVLLPLGKT). Disordered stretches follow at residues 19-52 (RHQD…EAEE) and 87-113 (WKKP…QSLI). N-linked (GlcNAc...) asparagine glycosylation is present at N26. Positions 88 to 101 (KKPEREMHPSRDSD) are enriched in basic and acidic residues. Cystine bridges form between C162–C209, C176–C223, C186–C239, and C190–C241. The CTCK domain occupies 162–246 (CRTVPFSQTI…EECQCKVKTE (85 aa)). N222 carries an N-linked (GlcNAc...) asparagine glycan.

Belongs to the DAN family. Forms monomers and predominantly dimers. Post-translationally, N-glycosylated.

The protein localises to the secreted. Functionally, cytokine that may play a role in anterior neural induction and somite formation during embryogenesis in part through a BMP-inhibitory mechanism. Can regulate Nodal signaling during gastrulation as well as the formation and patterning of the primitive streak. The polypeptide is Cerberus (CER1) (Homo sapiens (Human)).